The following is a 572-amino-acid chain: Phenylalanine--tRNA ligase beta subunit (572 aa).

In terms of domain architecture, B5 spans 285 to 363; it reads LSTTTKTVSH…RAFGFNELEP (79 aa). Mg(2+) is bound by residues Asp341, Asp347, Asp350, and Asp351.

Belongs to the phenylalanyl-tRNA synthetase beta subunit family. Type 2 subfamily. In terms of assembly, tetramer of two alpha and two beta subunits. Mg(2+) is required as a cofactor.

The protein localises to the cytoplasm. It catalyses the reaction tRNA(Phe) + L-phenylalanine + ATP = L-phenylalanyl-tRNA(Phe) + AMP + diphosphate + H(+). This Natronomonas pharaonis (strain ATCC 35678 / DSM 2160 / CIP 103997 / JCM 8858 / NBRC 14720 / NCIMB 2260 / Gabara) (Halobacterium pharaonis) protein is Phenylalanine--tRNA ligase beta subunit.